The following is a 332-amino-acid chain: Methionine import ATP-binding protein MetN (332 aa).

An ABC transporter domain is found at 2–241 (IELKGLTKVF…PGSRLRELFY (240 aa)). Residue 38–45 (GQSGAGKS) coordinates ATP.

This sequence belongs to the ABC transporter superfamily. Methionine importer (TC 3.A.1.24) family. In terms of assembly, the complex is composed of two ATP-binding proteins (MetN), two transmembrane proteins (MetI) and a solute-binding protein (MetQ).

The protein localises to the cell membrane. The enzyme catalyses L-methionine(out) + ATP + H2O = L-methionine(in) + ADP + phosphate + H(+). It catalyses the reaction D-methionine(out) + ATP + H2O = D-methionine(in) + ADP + phosphate + H(+). Functionally, part of the ABC transporter complex MetNIQ involved in methionine import. Responsible for energy coupling to the transport system. This chain is Methionine import ATP-binding protein MetN, found in Symbiobacterium thermophilum (strain DSM 24528 / JCM 14929 / IAM 14863 / T).